The sequence spans 244 residues: GTP cyclohydrolase 1 type 2 homolog (244 aa).

Positions 65, 66, 102, 216, and 220 each coordinate a divalent metal cation.

The protein belongs to the GTP cyclohydrolase I type 2/NIF3 family. Homohexamer; trimer of dimers, that forms a hollow cage-like architecture.

Functionally, DNA-binding protein exhibiting the ability to bind to both single-stranded and double-stranded DNA. The polypeptide is GTP cyclohydrolase 1 type 2 homolog (Methanocaldococcus jannaschii (strain ATCC 43067 / DSM 2661 / JAL-1 / JCM 10045 / NBRC 100440) (Methanococcus jannaschii)).